The chain runs to 397 residues: uncharacterized protein (397 aa).

Transmembrane regions (helical) follow at residues 62 to 79, 92 to 109, 135 to 154, and 167 to 189; these read VLLFGILIFSIFVALIAI, WYGLLAFGVLTSLELVVT, VVFLPLICVYSLSILYSTLS, and AFLKTMLFTLLICSFILNFFPGI.

The protein localises to the cell membrane. This is an uncharacterized protein from Archaeoglobus fulgidus (strain ATCC 49558 / DSM 4304 / JCM 9628 / NBRC 100126 / VC-16).